We begin with the raw amino-acid sequence, 333 residues long: Cytochrome f (333 aa).

The first 16 residues, methionine 1 to alanine 16, serve as a signal peptide directing secretion. The chain crosses the membrane as a helical span at residues isoleucine 17–leucine 36. Tyrosine 45, cysteine 66, cysteine 69, and histidine 70 together coordinate heme. The helical transmembrane segment at valine 299–lysine 319 threads the bilayer.

Belongs to the cytochrome f family. In terms of assembly, the 4 large subunits of the cytochrome b6-f complex are cytochrome b6, subunit IV (17 kDa polypeptide, PetD), cytochrome f and the Rieske protein, while the 4 small subunits are PetG, PetL, PetM and PetN. The complex functions as a dimer. Requires heme as cofactor.

It is found in the cellular thylakoid membrane. In terms of biological role, component of the cytochrome b6-f complex, which mediates electron transfer between photosystem II (PSII) and photosystem I (PSI), cyclic electron flow around PSI, and state transitions. In Nostoc punctiforme (strain ATCC 29133 / PCC 73102), this protein is Cytochrome f.